The sequence spans 311 residues: MKWSEICIHTTHEAVEPISNILHEAGASGVVIEDPLDLIKERENVYGEIYQLDPNDYPDEGVIIKAYLPINSFLGETVEGIKETINNLLLYDIDLGRNKITISEVNEEEWATAWKKYYHPVKISEKFTIVPTWEEYTPVHTDELIIEMDPGMAFGTGTHPTTVLCIQALERYVKEGDSVVDVGTGTGILSIASAMLRAKQVEGYDLDPVAVESARLNSKLNKVSDHIEIKQNNLLDGVEGEKDIIVANILAEVILRFTDQAYSLLKDGGYFITSGIIQQKKQEVKDALVKEGFTIVEVLSMEDWVSIIAKK.

Residues threonine 162, glycine 183, aspartate 205, and asparagine 248 each contribute to the S-adenosyl-L-methionine site.

This sequence belongs to the methyltransferase superfamily. PrmA family.

The protein localises to the cytoplasm. The catalysed reaction is L-lysyl-[protein] + 3 S-adenosyl-L-methionine = N(6),N(6),N(6)-trimethyl-L-lysyl-[protein] + 3 S-adenosyl-L-homocysteine + 3 H(+). Its function is as follows. Methylates ribosomal protein L11. The sequence is that of Ribosomal protein L11 methyltransferase from Bacillus licheniformis (strain ATCC 14580 / DSM 13 / JCM 2505 / CCUG 7422 / NBRC 12200 / NCIMB 9375 / NCTC 10341 / NRRL NRS-1264 / Gibson 46).